The following is a 706-amino-acid chain: DNA ligase (706 aa).

NAD(+) is bound by residues 48–52 (DAAYD), 97–98 (SL), and Glu-131. The active-site N6-AMP-lysine intermediate is Lys-133. NAD(+) contacts are provided by Arg-154, Glu-191, Lys-307, and Lys-331. Residues Cys-425, Cys-428, Cys-443, and Cys-449 each contribute to the Zn(2+) site. A BRCT domain is found at 628-706 (RADSAVAGKT…EDEWLKLIEG (79 aa)).

This sequence belongs to the NAD-dependent DNA ligase family. LigA subfamily. The cofactor is Mg(2+). It depends on Mn(2+) as a cofactor.

The enzyme catalyses NAD(+) + (deoxyribonucleotide)n-3'-hydroxyl + 5'-phospho-(deoxyribonucleotide)m = (deoxyribonucleotide)n+m + AMP + beta-nicotinamide D-nucleotide.. In terms of biological role, DNA ligase that catalyzes the formation of phosphodiester linkages between 5'-phosphoryl and 3'-hydroxyl groups in double-stranded DNA using NAD as a coenzyme and as the energy source for the reaction. It is essential for DNA replication and repair of damaged DNA. This chain is DNA ligase, found in Afipia carboxidovorans (strain ATCC 49405 / DSM 1227 / KCTC 32145 / OM5) (Oligotropha carboxidovorans).